A 338-amino-acid polypeptide reads, in one-letter code: STEAP1 protein (338 aa).

2 helical membrane-spanning segments follow: residues 70-90 (WHLP…YTLL) and 118-138 (PMVS…AAIV). The 148-residue stretch at 117–264 (LPMVSITLLA…TLGIVSLLLG (148 aa)) folds into the Ferric oxidoreductase domain. FAD contacts are provided by glutamine 139 and arginine 160. 4 helical membrane passes run 163-183 (FGLL…SYPM), 217-237 (IYVS…VTSI), 252-272 (IQST…LIFA), and 290-310 (FMIA…LLLP). Histidine 174 is a heme b binding site. The FAD site is built by serine 236 and glutamine 253. Histidine 267 is a binding site for heme b.

This sequence belongs to the STEAP family. Homotrimer. Requires FAD as cofactor. Heme b serves as cofactor.

The protein localises to the endosome membrane. Its subcellular location is the cell membrane. Its function is as follows. Does not function as a metalloreductase due to the absence of binding sites for the electron-donating substrate NADPH. This chain is STEAP1 protein (STEAP1), found in Sus scrofa (Pig).